The sequence spans 965 residues: Meiosis-specific coiled-coil domain-containing protein MEIOC (965 aa).

Disordered regions lie at residues 1–22 (MEVSGGDTCRPRHPQGLREGPE) and 946–965 (VHESINSSNPMNQRGETSKH). Polar residues predominate over residues 949 to 965 (SINSSNPMNQRGETSKH).

As to quaternary structure, interacts with YTHDC2; binds transcripts that regulate the mitotic cell cycle inhibiting progression into metaphase, thereby allowing meiotic prophase to proceed normally. Interacts with RBM46. Expressed specifically in fetal ovary and postnatal and adult testes (at protein level). In adult testis expressed in spermatocytes, beginning in preleptotene and extending through most stages of meiotic prophase I, including leptotene, zygotene, and pachytene.

The protein localises to the cytoplasm. Its subcellular location is the nucleus. Is required for meiosis completion in both male and female germ cells. Confers stability to numerous meiotic mRNAs in gonads allowing proper initiation and progression into meiosis prophase I. The function may involve YTHDC2 and is independent of induction by retinoic acid (RA). Maintains an extended meiotic prophase I by properly promoting the transition from a mitotic to a meiotic cell cycle program by binding transcripts through its interaction with YTHDC2 that regulate the mitotic cell cycle. This chain is Meiosis-specific coiled-coil domain-containing protein MEIOC, found in Mus musculus (Mouse).